The sequence spans 346 residues: Phosphate acyltransferase (346 aa).

This sequence belongs to the PlsX family. In terms of assembly, homodimer. Probably interacts with PlsY.

The protein resides in the cytoplasm. It carries out the reaction a fatty acyl-[ACP] + phosphate = an acyl phosphate + holo-[ACP]. The protein operates within lipid metabolism; phospholipid metabolism. Its function is as follows. Catalyzes the reversible formation of acyl-phosphate (acyl-PO(4)) from acyl-[acyl-carrier-protein] (acyl-ACP). This enzyme utilizes acyl-ACP as fatty acyl donor, but not acyl-CoA. This Geotalea uraniireducens (strain Rf4) (Geobacter uraniireducens) protein is Phosphate acyltransferase.